A 607-amino-acid polypeptide reads, in one-letter code: Glycerophosphodiester phosphodiesterase domain-containing protein 5 (607 aa).

Over 1–42 (MVRHQPLQYYEPQLCLSCLTGIYGCRWKRYQRSHDDTTPWER) the chain is Cytoplasmic. 2 cysteine pairs are disulfide-bonded: cysteine 15–cysteine 18 and cysteine 25–cysteine 571. A helical transmembrane segment spans residues 43–63 (LWFLLLVCTFSLTLTWLYFWW). The Extracellular segment spans residues 64–89 (GVHNDYDEFNWYLYNRMGYWSDWSVP). A helical membrane pass occupies residues 90–110 (ILVTSAAAFTYIAGLLVLALC). At 111–125 (HIAVGQQLNLHWIHK) the chain is on the cytoplasmic side. Residues 126-146 (MGLVVILASTVVAMSAVAQLW) traverse the membrane as a helical segment. The Extracellular segment spans residues 147–160 (EDEWEVLLISLQGT). A helical membrane pass occupies residues 161–181 (APFLHIGALVAITALSWIVAG). Over 182–192 (QFARAERSSSQ) the chain is Cytoplasmic. A helical transmembrane segment spans residues 193–213 (LTILCTFFAVVFTFYLIPLTI). Residues 214 to 496 (SSPCIMEKKD…PLWIMPPDEY (283 aa)) lie on the Extracellular side of the membrane. The region spanning 228–485 (PALIGHRGAP…DNSHTLSRVP (258 aa)) is the GP-PDE domain. 5 N-linked (GlcNAc...) asparagine glycosylation sites follow: asparagine 301, asparagine 336, asparagine 352, asparagine 374, and asparagine 448. The chain crosses the membrane as a helical span at residues 497–517 (CLMWVTADLISFSLIIGIFVL). Over 518-607 (QKWRLGGIRS…AKTVTEQSGH (90 aa)) the chain is Cytoplasmic. The disordered stretch occupies residues 582 to 607 (ANSTATPVGPRNAGSRAKTVTEQSGH).

This sequence belongs to the glycerophosphoryl diester phosphodiesterase family. In terms of assembly, interacts with PRDX1; forms a mixed-disulfide with PRDX1, leading to disrupt intramolecular disulfide bond between Cys-25 and Cys-571. In terms of processing, intramolecular disulfide bond between Cys-25 and Cys-571 is reduced by PRDX1. In terms of tissue distribution, detected in brain, lung, heart, kidney and testis.

Its subcellular location is the endomembrane system. It localises to the cytoplasm. It is found in the perinuclear region. The protein resides in the cell projection. The protein localises to the growth cone. The catalysed reaction is a 1,2-diacyl-sn-glycero-3-phospho-(1D-myo-inositol-4,5-bisphosphate) + H2O = 1D-myo-inositol 1,4,5-trisphosphate + a 1,2-diacyl-sn-glycerol + H(+). The enzyme catalyses sn-glycerol 3-phosphocholine + H2O = sn-glycerol 3-phosphate + choline + H(+). Inhibited by high level of NaCl or urea. Its function is as follows. Glycerophosphodiester phosphodiesterase that promotes neurite formation and drives spinal motor neuron differentiation. Mediates the cleavage of glycosylphosphatidylinositol (GPI) anchor of target proteins: removes the GPI-anchor of RECK, leading to release RECK from the plasma membrane. May contribute to the osmotic regulation of cellular glycerophosphocholine. The sequence is that of Glycerophosphodiester phosphodiesterase domain-containing protein 5 from Mus musculus (Mouse).